Here is a 181-residue protein sequence, read N- to C-terminus: Probable chemoreceptor glutamine deamidase CheD (181 aa).

It belongs to the CheD family.

It carries out the reaction L-glutaminyl-[protein] + H2O = L-glutamyl-[protein] + NH4(+). Probably deamidates glutamine residues to glutamate on methyl-accepting chemotaxis receptors (MCPs), playing an important role in chemotaxis. The polypeptide is Probable chemoreceptor glutamine deamidase CheD (Agrobacterium fabrum (strain C58 / ATCC 33970) (Agrobacterium tumefaciens (strain C58))).